The primary structure comprises 800 residues: Structural protein ORF800 (800 aa).

Coiled-coil stretches lie at residues Ala-98–Ala-130, Leu-447–Leu-475, Ala-514–Leu-567, and Ala-606–Ala-633. The disordered stretch occupies residues Ala-759–Val-800. The segment covering Ser-761–Glu-776 has biased composition (acidic residues). The segment covering Glu-785–Val-800 has biased composition (basic and acidic residues).

Its subcellular location is the virion. This chain is Structural protein ORF800, found in Acidianus convivator (ATV).